Reading from the N-terminus, the 969-residue chain is Translation initiation factor IF-2 (969 aa).

Positions 96 to 377 (KRDPAEPVRA…NSRNQHQDRR (282 aa)) are disordered. Composition is skewed to low complexity over residues 105–157 (AEPA…QAEP), 167–181 (AAPAQAVAEPVEPAK), and 216–252 (PSAPAESPKSAKAEPAAAPKTTAKPGEIRRAAAPAAP). The span at 253-264 (DRAREEARRAAE) shows a compositional bias: basic and acidic residues. The segment covering 357–366 (RAGGKGGRGG) has biased composition (gly residues). The tr-type G domain occupies 470–637 (PRAPVVTVMG…NVLLQAEILE (168 aa)). Residues 479–486 (GHVDHGKT) are G1. A GTP-binding site is contributed by 479 to 486 (GHVDHGKT). Residues 504-508 (GITQH) are G2. Positions 525–528 (DTPG) are G3. GTP-binding positions include 525 to 529 (DTPGH) and 579 to 582 (NKID). The tract at residues 579-582 (NKID) is G4. Residues 615–617 (SAK) are G5.

It belongs to the TRAFAC class translation factor GTPase superfamily. Classic translation factor GTPase family. IF-2 subfamily.

The protein localises to the cytoplasm. Its function is as follows. One of the essential components for the initiation of protein synthesis. Protects formylmethionyl-tRNA from spontaneous hydrolysis and promotes its binding to the 30S ribosomal subunits. Also involved in the hydrolysis of GTP during the formation of the 70S ribosomal complex. The polypeptide is Translation initiation factor IF-2 (Bordetella parapertussis (strain 12822 / ATCC BAA-587 / NCTC 13253)).